A 475-amino-acid polypeptide reads, in one-letter code: UDP-glycosyltransferase 76E1 (475 aa).

H19 serves as the catalytic Proton acceptor. H19 serves as a coordination point for an anthocyanidin. The active-site Charge relay is the D109. 8 residues coordinate UDP-alpha-D-glucose: T131, A329, Q331, H346, W349, N350, S351, and E354. Residue A369 coordinates an anthocyanidin. D370 and Q371 together coordinate UDP-alpha-D-glucose.

Belongs to the UDP-glycosyltransferase family. As to expression, expressed in flowers and fruits.

It is found in the cytoplasm. The protein resides in the nucleus. The catalysed reaction is 2-cis-(+)-abscisate + UDP-alpha-D-glucose = beta-D-glucopyranosyl cis-(+)-abscisate + UDP. Functionally, glucosyltransferase acting on abscisic acid (ABA) but not on auxin (IAA). This is UDP-glycosyltransferase 76E1 from Solanum lycopersicum (Tomato).